The following is a 1037-amino-acid chain: MAALRISVWILVQALMMALVSSNSSHFLQLPQSQSVVENESVDFECQASTDPSSELHYEWLHNGHRIAYDKRVYQIGSHLHIEAVQRAEDVGDYVCIATSLASGAREASPPAKLSVIYIDSASVQLLGSNRNELLLKCHVEAVSGSDDPLQIEWYRNSAKLSSWQNVQLDQHRLIIRQPSAADDGLYRCTASNAAGRVMSKQGYVYRSSLKCLPRLPRRKNQKLPESWSKEVFLCRGKRGGSGGVEALPSAPEDLRIVQGPASHAIIKEGDPAALTCLYELPAELQNQRIQLRWRKDGKLLRHVELGNSLPLPGISSDSGKDALLREDARLVLHKQNGTLSFASIIASDAGQYQCQLQLEGYAPINSSPGTLEVIEQLKFVPQPTSKNLELDAPIAKVHCKAQGTPTPQVQWMRDDANTSLPDQVEVDANGTLIFRNVNADHRGNYTCLATNSQGQINATVAINVVVTPKFSVPPVGPIETAEQGNVVIHCQAIGDPKPTIQWDKDLTYLSENNTDRERFRFLENGTLEIRNVQAEDEGSYGCTIGNSAGLKREDVQLVVKTAGDGFPPEESGGDGFLVTRAVLITMTVALAYIVLVVGLMLWCRYRRQARKARLNELSTKEAGGDQPDGAANGKGSEQEPCLSKQRNGHGGQSRSKSNGDAQKSDDTACSQQSRASKKSAHIYEQLALPRSGLTELIQIGRGEFGDVFVGKLKASLVATGSPSDKDADTEKQHSNSENGSGGSGSGSTTLSTLNEKRRSKTSMDDIEEIKEEEQEQQQSDLDQLVLVKALNKVKDEQACQEFRRQLDLLRGISHKGVVRLFGLCREKDPHYMVLEYTDWGDLKQFLLATAGKVNTASAAATSSPPPLTTSQVLAVAYQIARGMDAIYRARFTHRDLATRNCVISSEFIVKVSYPALCKDKYSREYHKHRNTLLPIRWLAPECIQEDEYTTKSDIFAYGVVVWELFNQATKLPHEELTNEQVIQKSQAGTLEWTVAESTPDSLREILLSCWVSNPKERPSFSQLGAALSKAMQSLEK.

An N-terminal signal peptide occupies residues M1–S22. N-linked (GlcNAc...) asparagine glycans are attached at residues N23 and N39. Over N23 to A582 the chain is Extracellular. 5 consecutive Ig-like C2-type domains span residues S25–S115, L114–S200, P252–N366, P369–N464, and P469–V559. 4 disulfide bridges follow: C46-C96, C138-C189, C277-C355, and C400-C448. 7 N-linked (GlcNAc...) asparagine glycosylation sites follow: N337, N418, N430, N445, N458, N513, and N525. Residues C491 and C543 are joined by a disulfide bond. A helical membrane pass occupies residues V583–W603. Residues C604–K1037 lie on the Cytoplasmic side of the membrane. Disordered stretches follow at residues L618–A681 and A719–M764. Polar residues predominate over residues Q653–R675. S680 carries the post-translational modification Phosphoserine. In terms of domain architecture, Protein kinase; inactive spans L694–L1035. Residues S724–S735 are compositionally biased toward basic and acidic residues.

It belongs to the protein kinase superfamily. Tyr protein kinase family. Insulin receptor subfamily. As to quaternary structure, interacts with plexA; component of a receptor complex that mediates the repulsive signaling in response to Semaphorin ligands.

It localises to the cell membrane. Functionally, acts as a calcium-dependent, homophilic cell adhesion molecule that regulates neural recognition during the development of the nervous system. Component of the repulsive Plexin signaling response to regulate motor axon guidance at the embryonic stage. Also component of a receptor complex that is required in the adult visual system to innervate the lamina layer; specific targeting of R1-R6 axons. In Drosophila ananassae (Fruit fly), this protein is Tyrosine-protein kinase-like otk.